Consider the following 346-residue polypeptide: Ribosomal RNA small subunit methyltransferase H (346 aa).

Residues 46–48, Asp63, Phe90, Asp113, and Gln120 each bind S-adenosyl-L-methionine; that span reads GGY. Residues 270–346 form a disordered region; sequence GGSAGSRHMP…LPETNELARS (77 aa).

This sequence belongs to the methyltransferase superfamily. RsmH family.

It is found in the cytoplasm. The catalysed reaction is cytidine(1402) in 16S rRNA + S-adenosyl-L-methionine = N(4)-methylcytidine(1402) in 16S rRNA + S-adenosyl-L-homocysteine + H(+). In terms of biological role, specifically methylates the N4 position of cytidine in position 1402 (C1402) of 16S rRNA. This is Ribosomal RNA small subunit methyltransferase H from Brucella abortus (strain S19).